A 468-amino-acid polypeptide reads, in one-letter code: UDP-N-acetylmuramate--L-alanine ligase (468 aa).

112-118 (GTHGKTT) is an ATP binding site.

The protein belongs to the MurCDEF family.

The protein localises to the cytoplasm. The catalysed reaction is UDP-N-acetyl-alpha-D-muramate + L-alanine + ATP = UDP-N-acetyl-alpha-D-muramoyl-L-alanine + ADP + phosphate + H(+). It participates in cell wall biogenesis; peptidoglycan biosynthesis. In terms of biological role, cell wall formation. This chain is UDP-N-acetylmuramate--L-alanine ligase, found in Bordetella avium (strain 197N).